Consider the following 333-residue polypeptide: L-asparagine oxygenase (333 aa).

Residues glutamate 125 and asparagine 146 each contribute to the L-asparagine site. Fe cation is bound by residues histidine 155 and glutamate 157. Residues glutamate 157 and asparagine 158 each contribute to the L-asparagine site. Histidine 287 lines the Fe cation pocket. Arginine 301 contacts 2-oxoglutarate. L-asparagine is bound at residue arginine 305.

Belongs to the clavaminate synthase family. Fe(2+) is required as a cofactor.

It catalyses the reaction L-asparagine + 2-oxoglutarate + O2 = (2S,3S)-3-hydroxyasparagine + succinate + CO2. It participates in antibiotic biosynthesis; calcium-dependent antibiotic biosynthesis. Its function is as follows. Catalyzes the 3-hydroxylation of L-asparagine to (2S,3S)-3-hydroxyasparagine. The 3-hydroxylated asparagine produced is incorporated at position 9 during the biosynthesis of the non-ribosomally synthesized calcium-dependent antibiotic (CDA), a 11-residue acidic lipopeptide lactone. Is able to hydroxylate only free L-asparagine, since it hydroxylates neither a CDA analog with unmodified Asn at position 9 nor a peptidyl-carrier-protein (PCP)-bound asparagine. Is not active toward D-asparagine. The sequence is that of L-asparagine oxygenase (asnO) from Streptomyces coelicolor (strain ATCC BAA-471 / A3(2) / M145).